The primary structure comprises 991 residues: Pro-apoptotic serine protease NMA111 (991 aa).

The segment at 1-57 is disordered; it reads MTVGKRKLSNGTVNEAKRLDDHVPVVAPSTNPDFENANGEDNEDIDDYSSEGEMSPQ. Over residues 38–50 the composition is skewed to acidic residues; that stretch reads NGEDNEDIDDYSS. Residues 86-269 are serine protease; sequence HVSNFDTESS…LPVYRPLRAL (184 aa). Residues H117, D148, and S231 each act as charge relay system in the active site. 2 PDZ domains span residues 296–374 and 885–957; these read RRLG…QRNG and PHHG…VSFD.

This sequence belongs to the peptidase S1C family.

The protein resides in the nucleus. In terms of biological role, nuclear serine protease which mediates apoptosis. The polypeptide is Pro-apoptotic serine protease NMA111 (NMA111) (Meyerozyma guilliermondii (strain ATCC 6260 / CBS 566 / DSM 6381 / JCM 1539 / NBRC 10279 / NRRL Y-324) (Yeast)).